A 1091-amino-acid chain; its full sequence is Self-sufficient cytochrome P450 monooxygenase CYP505E1 (1091 aa).

Heme is bound at residue C433. The Flavodoxin-like domain maps to 528–669 (ICFFYGSNSG…DLEAWEETSL (142 aa)). FMN contacts are provided by residues 534-538 (SNSGT) and 613-645 (VFGCGHHDWTQTFYRIPTLIDELMHKAGATRLA). Positions 707–935 (KDLMEARVTT…RPAKEAFHLP (229 aa)) constitute an FAD-binding FR-type domain.

It in the N-terminal section; belongs to the cytochrome P450 family. Requires FAD as cofactor. The cofactor is FMN. Heme serves as cofactor.

It catalyses the reaction 2 oxidized [cytochrome P450] + NADPH = 2 reduced [cytochrome P450] + NADP(+) + H(+). The enzyme catalyses an organic molecule + reduced [NADPH--hemoprotein reductase] + O2 = an alcohol + oxidized [NADPH--hemoprotein reductase] + H2O + H(+). The catalysed reaction is dodecanoate + reduced [NADPH--hemoprotein reductase] + O2 = 5-hydroxydodecanoate + oxidized [NADPH--hemoprotein reductase] + H2O + H(+). It carries out the reaction tetradecanoate + reduced [NADPH--hemoprotein reductase] + O2 = 7-hydroxytetradecanoate + oxidized [NADPH--hemoprotein reductase] + H2O + H(+). It catalyses the reaction dodecan-1-ol + reduced [NADPH--hemoprotein reductase] + O2 = 1,5-dodecanediol + oxidized [NADPH--hemoprotein reductase] + H2O + H(+). The enzyme catalyses dodecan-1-ol + reduced [NADPH--hemoprotein reductase] + O2 = 1,4-dodecanediol + oxidized [NADPH--hemoprotein reductase] + H2O + H(+). The catalysed reaction is dodecan-1-ol + reduced [NADPH--hemoprotein reductase] + O2 = 1,6-dodecanediol + oxidized [NADPH--hemoprotein reductase] + H2O + H(+). Its function is as follows. Self-sufficient cytochrome P450 monooxygenase that catalyzes the regioselective in-chain hydroxylation of alkanes, fatty alcohols, and fatty acids at the omega-7 position. Performs hydroxylation of C10-C16 n-alkanes and C12 and C14 fatty alcohols; and thereby enables the one step biocatalytic synthesis of rare alcohols such as 5-dodecanol and 7-tetradecanol. Converts 1-dodecanol into 1,5-dodecanediol as major product with very little sub-terminally hydroxylated products with the 1,4-dodecanediol and 1,6-dodecanediol more abundant. Converts dodecanoic acid to 5-hydroxydodecanoic acid which can be further converted into delta-dodecalactone by lactonization of the 5-hydroxy acid at low pH. Also gives sub-terminal hydroxylation of dodecanoic acid with 9-hydroxydodecanoic acid being the second most abundant product. This chain is Self-sufficient cytochrome P450 monooxygenase CYP505E1, found in Aspergillus niger (strain ATCC MYA-4892 / CBS 513.88 / FGSC A1513).